The chain runs to 336 residues: Dihydroorotate dehydrogenase (quinone) (336 aa).

FMN is bound by residues 62–66 and Thr-86; that span reads AGLDK. Lys-66 serves as a coordination point for substrate. Substrate is bound at residue 111–115; that stretch reads NRMGF. FMN is bound by residues Asn-139 and Asn-172. Position 172 (Asn-172) interacts with substrate. The Nucleophile role is filled by Ser-175. Asn-177 lines the substrate pocket. Residues Lys-217 and Thr-245 each contribute to the FMN site. A substrate-binding site is contributed by 246 to 247; that stretch reads NT. FMN-binding positions include Gly-268, Gly-297, and 318–319; that span reads YS.

The protein belongs to the dihydroorotate dehydrogenase family. Type 2 subfamily. Monomer. Requires FMN as cofactor.

It localises to the cell membrane. The enzyme catalyses (S)-dihydroorotate + a quinone = orotate + a quinol. The protein operates within pyrimidine metabolism; UMP biosynthesis via de novo pathway; orotate from (S)-dihydroorotate (quinone route): step 1/1. Functionally, catalyzes the conversion of dihydroorotate to orotate with quinone as electron acceptor. In Shigella dysenteriae serotype 1 (strain Sd197), this protein is Dihydroorotate dehydrogenase (quinone).